A 343-amino-acid polypeptide reads, in one-letter code: Methionine import ATP-binding protein MetN 1 (343 aa).

Positions 2–241 (IKLSNITKVF…PKTPLAQKFI (240 aa)) constitute an ABC transporter domain. 38–45 (GASGAGKS) is an ATP binding site.

Belongs to the ABC transporter superfamily. Methionine importer (TC 3.A.1.24) family. The complex is composed of two ATP-binding proteins (MetN), two transmembrane proteins (MetI) and a solute-binding protein (MetQ).

It localises to the cell inner membrane. It catalyses the reaction L-methionine(out) + ATP + H2O = L-methionine(in) + ADP + phosphate + H(+). The catalysed reaction is D-methionine(out) + ATP + H2O = D-methionine(in) + ADP + phosphate + H(+). Its function is as follows. Part of the ABC transporter complex MetNIQ involved in methionine import. Responsible for energy coupling to the transport system. This is Methionine import ATP-binding protein MetN 1 from Salmonella typhi.